The following is a 403-amino-acid chain: Cysteine desulfurase IscS (403 aa).

Residues 73–74 (AT), N153, Q181, and 201–203 (SAH) each bind pyridoxal 5'-phosphate. The residue at position 204 (K204) is an N6-(pyridoxal phosphate)lysine. T241 provides a ligand contact to pyridoxal 5'-phosphate. The active-site Cysteine persulfide intermediate is C326. C326 is a [2Fe-2S] cluster binding site.

It belongs to the class-V pyridoxal-phosphate-dependent aminotransferase family. NifS/IscS subfamily. Homodimer. Forms a heterotetramer with IscU, interacts with other sulfur acceptors. The cofactor is pyridoxal 5'-phosphate.

It is found in the cytoplasm. The catalysed reaction is (sulfur carrier)-H + L-cysteine = (sulfur carrier)-SH + L-alanine. It participates in cofactor biosynthesis; iron-sulfur cluster biosynthesis. Functionally, master enzyme that delivers sulfur to a number of partners involved in Fe-S cluster assembly, tRNA modification or cofactor biosynthesis. Catalyzes the removal of elemental sulfur atoms from cysteine to produce alanine. Functions as a sulfur delivery protein for Fe-S cluster synthesis onto IscU, an Fe-S scaffold assembly protein, as well as other S acceptor proteins. In Methylococcus capsulatus (strain ATCC 33009 / NCIMB 11132 / Bath), this protein is Cysteine desulfurase IscS.